A 270-amino-acid polypeptide reads, in one-letter code: Chymotrypsin-like elastase family member 3B (270 aa).

The or 16 signal peptide spans 1–15 (MMLRLLSSLLLVAVA). The propeptide at 16 to 28 (SGYGPPSSRPSSR) is activation peptide. A Peptidase S1 domain is found at 29–268 (VVNGEDAVPY…FIDWIEETIA (240 aa)). Cysteines 58 and 74 form a disulfide. Histidine 73 (charge relay system) is an active-site residue. N-linked (GlcNAc...) asparagine glycosylation is present at asparagine 114. Cysteine 117 and cysteine 120 are oxidised to a cystine. The active-site Charge relay system is aspartate 123. Cystine bridges form between cysteine 157/cysteine 223, cysteine 188/cysteine 204, and cysteine 213/cysteine 244. Serine 217 functions as the Charge relay system in the catalytic mechanism.

It belongs to the peptidase S1 family. Elastase subfamily. As to expression, pancreas. Not detectable in keratinocytes.

It catalyses the reaction Preferential cleavage: Ala-|-Xaa. Does not hydrolyze elastin.. In terms of biological role, efficient protease with alanine specificity but only little elastolytic activity. The sequence is that of Chymotrypsin-like elastase family member 3B (CELA3B) from Homo sapiens (Human).